Reading from the N-terminus, the 201-residue chain is dITP/XTP pyrophosphatase (201 aa).

9 to 14 (SNNAGK) contributes to the substrate binding site. Residues glutamate 41 and aspartate 70 each coordinate Mg(2+). Aspartate 70 acts as the Proton acceptor in catalysis. Residues serine 71, 155 to 158 (FGYD), lysine 178, and 183 to 184 (HR) each bind substrate.

This sequence belongs to the HAM1 NTPase family. As to quaternary structure, homodimer. Mg(2+) serves as cofactor.

It catalyses the reaction XTP + H2O = XMP + diphosphate + H(+). The enzyme catalyses dITP + H2O = dIMP + diphosphate + H(+). The catalysed reaction is ITP + H2O = IMP + diphosphate + H(+). Its function is as follows. Pyrophosphatase that catalyzes the hydrolysis of nucleoside triphosphates to their monophosphate derivatives, with a high preference for the non-canonical purine nucleotides XTP (xanthosine triphosphate), dITP (deoxyinosine triphosphate) and ITP. Seems to function as a house-cleaning enzyme that removes non-canonical purine nucleotides from the nucleotide pool, thus preventing their incorporation into DNA/RNA and avoiding chromosomal lesions. The sequence is that of dITP/XTP pyrophosphatase from Methylococcus capsulatus (strain ATCC 33009 / NCIMB 11132 / Bath).